Reading from the N-terminus, the 452-residue chain is 1,3-beta-glucanosyltransferase gel1 (452 aa).

The N-terminal stretch at 1–19 (MKASAVTAALAVGASTVLA) is a signal peptide. The cysteines at positions 71 and 100 are disulfide-linked. Tyrosine 89, asparagine 159, glutamate 160, aspartate 201, and arginine 206 together coordinate (1,3-beta-D-glucosyl)n. The active-site Proton donor is glutamate 160. Disulfide bonds link cysteine 215-cysteine 345 and cysteine 233-cysteine 264. N-linked (GlcNAc...) asparagine glycosylation occurs at asparagine 249. Glutamate 261 serves as the catalytic Nucleophile. Residue tyrosine 292 coordinates (1,3-beta-D-glucosyl)n. A compositionally biased stretch (polar residues) spans 325 to 340 (EKTSNPSGDGNYNKTG). The disordered stretch occupies residues 325-419 (EKTSNPSGDG…SGTSTSSKGA (95 aa)). Asparagine 337 is a glycosylation site (N-linked (GlcNAc...) asparagine). Over residues 393–419 (STATAEPGSGSATGSSSSGTSTSSKGA) the composition is skewed to low complexity. A lipid anchor (GPI-like-anchor amidated alanine) is attached at alanine 419. A propeptide spans 420-452 (AAGLTVPSLTMAPVVVGAVTLLSTVFGAGLVLL) (removed in mature form).

Belongs to the glycosyl hydrolase 72 family. In terms of processing, the GPI-like anchor contains a phosphoceramide lipid group.

It localises to the cell membrane. Splits internally a 1,3-beta-glucan molecule and transfers the newly generated reducing end (the donor) to the non-reducing end of another 1,3-beta-glucan molecule (the acceptor) forming a 1,3-beta linkage, resulting in the elongation of 1,3-beta-glucan chains in the cell wall. Involved in cell wall morphogenesis. This Aspergillus fumigatus (strain ATCC MYA-4609 / CBS 101355 / FGSC A1100 / Af293) (Neosartorya fumigata) protein is 1,3-beta-glucanosyltransferase gel1 (gel1).